The primary structure comprises 255 residues: MNKKRRLEKILDMLKIDGTITIKEIIDELDISDMTARRDLDALEADGLLTRTHGGAQLLSSKKPLEKTHIEKKSLNTKEKIDIAKKACSLIKDGDTIFIGPGTTLVQLALELKGRKGYKIRVITNSLPVFLILNDSETIDLLLLGGEYREITGAFVGSMASTNLKAMRFAKAFVRANAVTHNSIATYSDKEGVIQQLALNNAVEKFLLVDSTKFDRYDFFNFYNLDQLDTIITDNQISPQHLEEFSQYTTILKAD.

An HTH deoR-type domain is found at 3–58 (KKRRLEKILDMLKIDGTITIKEIIDELDISDMTARRDLDALEADGLLTRTHGGAQL). The segment at residues 20–39 (ITIKEIIDELDISDMTARRD) is a DNA-binding region (H-T-H motif).

Functionally, repressor of the lactose catabolism operon. Galactose-6-phosphate is the inducer. This is Lactose phosphotransferase system repressor (lacR) from Lactococcus lactis subsp. lactis (Streptococcus lactis).